We begin with the raw amino-acid sequence, 487 residues long: Sensor protein CopS (487 aa).

At 1-9 the chain is on the periplasmic side; the sequence is MKPGSLTLR. The helical transmembrane segment at 10-30 threads the bilayer; it reads LSLLFVVAVAAVLIIVGVAFN. Residues 31-136 are Cytoplasmic-facing; it reads ELSRHHFRAL…TASVSLPTAS (106 aa). The helical transmembrane segment at 137-157 threads the bilayer; sequence PPLTAWLVLDVTTHMHFFAML. Topologically, residues 158-159 are periplasmic; sequence ER. Residues 160–180 traverse the membrane as a helical segment; sequence WFWGVLLASTVLSAALGWLVA. Residues 181-234 enclose the HAMP domain; it reads KNGLRPVARVTQTAASMSAGSLKERIPLEPVPDELRALITAFNSMLGRLDDSFM. Residues 181 to 487 lie on the Cytoplasmic side of the membrane; it reads KNGLRPVARV…EHETGCHCAG (307 aa). The 214-residue stretch at 242–455 folds into the Histidine kinase domain; sequence DIAHELRTPI…LHPHLHAIAC (214 aa). Position 245 is a phosphohistidine; by autocatalysis (histidine 245).

Its subcellular location is the cell inner membrane. The catalysed reaction is ATP + protein L-histidine = ADP + protein N-phospho-L-histidine.. Member of the two-component regulatory system CopS/CopR. Involved in the activation of copper resistance gene operon copABCD. Specifically recognizes or transduces a signal only in response to copper. This would lead to phosphorylation of CopR in the cytoplasm. CopS/CopR may also regulate chromosomally encoded genes. May also be involved in basic copper metabolism. This Pseudomonas syringae pv. tomato protein is Sensor protein CopS (copS).